An 869-amino-acid chain; its full sequence is Leucine--tRNA ligase (869 aa).

A 'HIGH' region motif is present at residues 42-52 (PYPSGKLHMGH). A 'KMSKS' region motif is present at residues 624 to 628 (TMSKS). Lysine 627 provides a ligand contact to ATP.

Belongs to the class-I aminoacyl-tRNA synthetase family.

The protein localises to the cytoplasm. It catalyses the reaction tRNA(Leu) + L-leucine + ATP = L-leucyl-tRNA(Leu) + AMP + diphosphate. The protein is Leucine--tRNA ligase of Nitrosomonas europaea (strain ATCC 19718 / CIP 103999 / KCTC 2705 / NBRC 14298).